A 288-amino-acid polypeptide reads, in one-letter code: MGQKIHPTGFRLSVSRNWASRWYASNRDFAGMLAEDIKVREYLKAKLKNAAVSRILIERPAKNARITIFSARPGVVIGKKGEDIENLKKELATRLGVPVAVNIEEVRKPEIDAKLIADSITQQLEKRIMFRRAMKRAMQNAMRLGAQGIKIMSSGRLNGIEIARTEWYREGRVPLHTLRADIDYGTSEAKTTYGVIGVKVWVYKGDTLGRNDLPAAETPRPEEERRPRGPRRDGRPGDRAGAGRGGRRPMGTNAAPADGSDKPAGAGGDSVKRVKSAPAAAAADGKGE.

Residues 39 to 107 (VREYLKAKLK…PVAVNIEEVR (69 aa)) enclose the KH type-2 domain. The segment at 209-288 (GRNDLPAAET…AAAAADGKGE (80 aa)) is disordered. The span at 219 to 238 (PRPEEERRPRGPRRDGRPGD) shows a compositional bias: basic and acidic residues. The segment covering 277–288 (APAAAAADGKGE) has biased composition (low complexity).

Belongs to the universal ribosomal protein uS3 family. In terms of assembly, part of the 30S ribosomal subunit. Forms a tight complex with proteins S10 and S14.

Its function is as follows. Binds the lower part of the 30S subunit head. Binds mRNA in the 70S ribosome, positioning it for translation. The polypeptide is Small ribosomal subunit protein uS3 (Acidovorax sp. (strain JS42)).